The following is a 358-amino-acid chain: Chorismate synthase (358 aa).

The segment at 39–61 (ADIQPFLDKRRPGQSRHTTQRQE) is disordered. 2 residues coordinate NADP(+): arginine 48 and arginine 54. Residues 125 to 127 (RSS), 237 to 238 (NA), glycine 284, 299 to 303 (KPTSS), and arginine 325 each bind FMN.

It belongs to the chorismate synthase family. Homotetramer. FMNH2 serves as cofactor.

The enzyme catalyses 5-O-(1-carboxyvinyl)-3-phosphoshikimate = chorismate + phosphate. It participates in metabolic intermediate biosynthesis; chorismate biosynthesis; chorismate from D-erythrose 4-phosphate and phosphoenolpyruvate: step 7/7. Catalyzes the anti-1,4-elimination of the C-3 phosphate and the C-6 proR hydrogen from 5-enolpyruvylshikimate-3-phosphate (EPSP) to yield chorismate, which is the branch point compound that serves as the starting substrate for the three terminal pathways of aromatic amino acid biosynthesis. This reaction introduces a second double bond into the aromatic ring system. The polypeptide is Chorismate synthase (Sphingopyxis alaskensis (strain DSM 13593 / LMG 18877 / RB2256) (Sphingomonas alaskensis)).